The sequence spans 127 residues: Large ribosomal subunit protein bL17 (127 aa).

Belongs to the bacterial ribosomal protein bL17 family. As to quaternary structure, part of the 50S ribosomal subunit. Contacts protein L32.

The sequence is that of Large ribosomal subunit protein bL17 from Escherichia fergusonii (strain ATCC 35469 / DSM 13698 / CCUG 18766 / IAM 14443 / JCM 21226 / LMG 7866 / NBRC 102419 / NCTC 12128 / CDC 0568-73).